Here is a 206-residue protein sequence, read N- to C-terminus: Small ribosomal subunit protein uS4 (206 aa).

The region spanning 93–156 (CRLDNLVYRL…RKIKIIAEAL (64 aa)) is the S4 RNA-binding domain.

This sequence belongs to the universal ribosomal protein uS4 family. Part of the 30S ribosomal subunit. Contacts protein S5. The interaction surface between S4 and S5 is involved in control of translational fidelity.

Its function is as follows. One of the primary rRNA binding proteins, it binds directly to 16S rRNA where it nucleates assembly of the body of the 30S subunit. In terms of biological role, with S5 and S12 plays an important role in translational accuracy. The sequence is that of Small ribosomal subunit protein uS4 from Protochlamydia amoebophila (strain UWE25).